Reading from the N-terminus, the 601-residue chain is NADH-quinone oxidoreductase subunit C/D (601 aa).

Residues 1 to 191 (MKLTREFPSN…DPFMLDAVKQ (191 aa)) form an NADH dehydrogenase I subunit C region. The NADH dehydrogenase I subunit D stretch occupies residues 215-601 (DYMFLNLGPN…IDFVMSDVDR (387 aa)).

In the N-terminal section; belongs to the complex I 30 kDa subunit family. This sequence in the C-terminal section; belongs to the complex I 49 kDa subunit family. In terms of assembly, NDH-1 is composed of 13 different subunits. Subunits NuoB, CD, E, F, and G constitute the peripheral sector of the complex.

It localises to the cell inner membrane. The catalysed reaction is a quinone + NADH + 5 H(+)(in) = a quinol + NAD(+) + 4 H(+)(out). Functionally, NDH-1 shuttles electrons from NADH, via FMN and iron-sulfur (Fe-S) centers, to quinones in the respiratory chain. The immediate electron acceptor for the enzyme in this species is believed to be ubiquinone. Couples the redox reaction to proton translocation (for every two electrons transferred, four hydrogen ions are translocated across the cytoplasmic membrane), and thus conserves the redox energy in a proton gradient. This chain is NADH-quinone oxidoreductase subunit C/D, found in Aeromonas hydrophila subsp. hydrophila (strain ATCC 7966 / DSM 30187 / BCRC 13018 / CCUG 14551 / JCM 1027 / KCTC 2358 / NCIMB 9240 / NCTC 8049).